A 727-amino-acid chain; its full sequence is Telomere repeats-binding bouquet formation protein 1 (727 aa).

2 ARM repeats span residues 101-144 and 339-382; these read ELFE…RETG and NGLP…GEYP. The stretch at 398–446 forms a coiled coil; sequence ENNLEEHWRKAKEILHRIEQLEREGNEEEIQRENYQDNISSMNISIQNT. The span at 457–468 shows a compositional bias: basic and acidic residues; that stretch reads RGSKAEDEDKSH. Residues 457–493 form a disordered region; it reads RGSKAEDEDKSHSRQLQSYKSHGVMSKACTNDDQMKT. An interaction with TERF1 region spans residues 523–662; it reads QNLHEETTFE…QRLSNESTTP (140 aa). Threonine 648 carries the phosphothreonine modification. Positions 666 to 719 constitute a Myb-like domain; it reads KKRRIRKNFTEEEVNYLFNGVKKMGNHWNSILWSFPFQQGRKAVDLAHKYHKLT.

Belongs to the TERB1 family. In terms of assembly, component of the MAJIN-TERB1-TERB2 complex, composed of MAJIN, TERB1 and TERB2. Interacts with TERF1, STAG3 and SUN1. Interacts (via Myb-like domain) with the cohesin complex; probably mediated via interaction with STAG3. In terms of processing, phosphorylated by CDK. Phosphorylation by CDK takes place in late prophase when the cap exchange is prominent. is important for the stabilization of telomere attachment but dispenable for the cap exchange.

The protein localises to the chromosome. It localises to the telomere. The protein resides in the nucleus inner membrane. Its function is as follows. Meiosis-specific telomere-associated protein involved in meiotic telomere attachment to the nucleus inner membrane, a crucial step for homologous pairing and synapsis. Component of the MAJIN-TERB1-TERB2 complex, which promotes telomere cap exchange by mediating attachment of telomeric DNA to the inner nuclear membrane and replacement of the protective cap of telomeric chromosomes: in early meiosis, the MAJIN-TERB1-TERB2 complex associates with telomeric DNA and the shelterin/telosome complex. During prophase, the complex matures and promotes release of the shelterin/telosome complex from telomeric DNA. In the MAJIN-TERB1-TERB2 complex, TERB1 probably mediates association with the shelterin/telosome complex via interaction with TERF1, promoting priming telomeric DNA attachment'. Promotes telomere association with the nuclear envelope and deposition of the SUN-KASH/LINC complex. Also recruits cohesin to telomeres to develop structural rigidity. The sequence is that of Telomere repeats-binding bouquet formation protein 1 from Homo sapiens (Human).